The chain runs to 429 residues: Glutamate-1-semialdehyde 2,1-aminomutase (429 aa).

Lys265 is subject to N6-(pyridoxal phosphate)lysine.

It belongs to the class-III pyridoxal-phosphate-dependent aminotransferase family. HemL subfamily. In terms of assembly, homodimer. Requires pyridoxal 5'-phosphate as cofactor.

Its subcellular location is the cytoplasm. The enzyme catalyses (S)-4-amino-5-oxopentanoate = 5-aminolevulinate. The protein operates within porphyrin-containing compound metabolism; protoporphyrin-IX biosynthesis; 5-aminolevulinate from L-glutamyl-tRNA(Glu): step 2/2. The polypeptide is Glutamate-1-semialdehyde 2,1-aminomutase (Alkalilimnicola ehrlichii (strain ATCC BAA-1101 / DSM 17681 / MLHE-1)).